Consider the following 80-residue polypeptide: Bacteriochlorophyll c-binding protein (80 aa).

His-25 serves as a coordination point for a bacteriochlorophyll c. Positions 49 to 80 are disordered; the sequence is PGVSRSGSGEGAFSSSPSNGFRPKRIRSRFNR. Residues 54–80 constitute a propeptide that is removed on maturation; the sequence is SGSGEGAFSSSPSNGFRPKRIRSRFNR. Residues 70–80 show a composition bias toward basic residues; that stretch reads RPKRIRSRFNR.

It belongs to the BChl C/E-binding protein family.

It is found in the chlorosome. Its subcellular location is the chlorosome envelope. Component of the photosynthetic apparatus. The light harvesting B740 complex binds bacteriochlorophyll c. The protein is Bacteriochlorophyll c-binding protein (cmsA) of Chloroflexus aurantiacus (strain ATCC 29366 / DSM 635 / J-10-fl).